The chain runs to 564 residues: 3beta-hydroxysteroid-dehydrogenase/decarboxylase isoform 2 (564 aa).

Residue 16–21 (GGRGFA) coordinates NAD(+). Residues asparagine 146 and asparagine 158 are each glycosylated (N-linked (GlcNAc...) asparagine). Tyrosine 161 and lysine 165 together coordinate NAD(+). Lysine 165 functions as the Proton donor in the catalytic mechanism. In terms of domain architecture, Reticulon spans 384-564 (VADTLLWKDL…EKLFGSKKHD (181 aa)). The next 2 helical transmembrane spans lie at 398–418 (IAIF…STVV) and 424–444 (ALLV…KIFG). Asparagine 474 carries N-linked (GlcNAc...) asparagine glycosylation. 2 helical membrane passes run 486 to 506 (GNDW…SLAG) and 507 to 527 (AISL…AFLV).

The protein belongs to the 3-beta-HSD family.

It localises to the endoplasmic reticulum membrane. The catalysed reaction is a 3beta-hydroxysteroid-4alpha-carboxylate + NAD(+) = a 3-oxosteroid + CO2 + NADH. The enzyme catalyses 4alpha-carboxy-4beta,14alpha-dimethyl-9beta,19-cyclo-5alpha-ergost-24(24(1))-en-3beta-ol + NAD(+) = cycloeucalenone + CO2 + NADH. It functions in the pathway steroid biosynthesis; zymosterol biosynthesis; zymosterol from lanosterol: step 4/6. Functionally, 3beta-hydroxysteroid-dehydrogenase/decarboxylase involved in sterol synthesis. Catalyzes the formation of 3-oxosteroids from 3beta-hydroxysteroids-4alpha-carboxylate. Involved in the regulation of inflorescence internodes and leaves growth, probably by affecting auxin transporter activity possibly by altering sterol composition in the membranes. This chain is 3beta-hydroxysteroid-dehydrogenase/decarboxylase isoform 2, found in Arabidopsis thaliana (Mouse-ear cress).